Here is a 41-residue protein sequence, read N- to C-terminus: Large ribosomal subunit protein bL36 (41 aa).

It belongs to the bacterial ribosomal protein bL36 family.

This is Large ribosomal subunit protein bL36 from Xanthobacter autotrophicus (strain ATCC BAA-1158 / Py2).